Reading from the N-terminus, the 462-residue chain is ATP synthase subunit beta (462 aa).

Position 151-158 (151-158 (GGAGVGKT)) interacts with ATP.

The protein belongs to the ATPase alpha/beta chains family. F-type ATPases have 2 components, CF(1) - the catalytic core - and CF(0) - the membrane proton channel. CF(1) has five subunits: alpha(3), beta(3), gamma(1), delta(1), epsilon(1). CF(0) has four main subunits: a(1), b(1), b'(1) and c(9-12).

It localises to the cell inner membrane. The enzyme catalyses ATP + H2O + 4 H(+)(in) = ADP + phosphate + 5 H(+)(out). Functionally, produces ATP from ADP in the presence of a proton gradient across the membrane. The catalytic sites are hosted primarily by the beta subunits. In Pelodictyon phaeoclathratiforme (strain DSM 5477 / BU-1), this protein is ATP synthase subunit beta.